We begin with the raw amino-acid sequence, 136 residues long: Protein LITTLE ZIPPER 1 (136 aa).

Residues 97–122 are a coiled coil; sequence ENQNIIRENEKLKKKALLLHQENKTL.

In terms of assembly, interacts with REV. Expressed in the adaxial epidermis of the cotyledons and in the vascular cylinder of wild-type torpedo stage embryos.

Functionally, competitive inhibitor of the HD-ZIPIII transcription factors in shoot apical meristem (SAM) development. Acts by forming non-functional heterodimers. Part of a negative feedback loop. Essential for proper functioning of stem cells in the SAM. In Arabidopsis thaliana (Mouse-ear cress), this protein is Protein LITTLE ZIPPER 1.